We begin with the raw amino-acid sequence, 465 residues long: Putative mannose-1-phosphate guanylyltransferase (465 aa).

This sequence belongs to the mannose-6-phosphate isomerase type 2 family.

It catalyses the reaction alpha-D-mannose 1-phosphate + GTP + H(+) = GDP-alpha-D-mannose + diphosphate. The protein operates within nucleotide-sugar biosynthesis; GDP-alpha-D-mannose biosynthesis; GDP-alpha-D-mannose from alpha-D-mannose 1-phosphate (GTP route): step 1/1. It participates in bacterial outer membrane biogenesis; LPS O-antigen biosynthesis. The protein is Putative mannose-1-phosphate guanylyltransferase (rfbA) of Vibrio cholerae serotype O1 (strain ATCC 39315 / El Tor Inaba N16961).